A 56-amino-acid polypeptide reads, in one-letter code: Large ribosomal subunit protein bL32 (56 aa).

The span at 1–20 (MAVPKRRTSRSNTRSRRAQW) shows a compositional bias: basic residues. Residues 1-26 (MAVPKRRTSRSNTRSRRAQWKAKAPA) are disordered.

The protein belongs to the bacterial ribosomal protein bL32 family.

In Parafrankia sp. (strain EAN1pec), this protein is Large ribosomal subunit protein bL32.